The chain runs to 98 residues: Co-chaperonin GroES 1 (98 aa).

Belongs to the GroES chaperonin family. In terms of assembly, heptamer of 7 subunits arranged in a ring. Interacts with the chaperonin GroEL.

It is found in the cytoplasm. In terms of biological role, together with the chaperonin GroEL, plays an essential role in assisting protein folding. The GroEL-GroES system forms a nano-cage that allows encapsulation of the non-native substrate proteins and provides a physical environment optimized to promote and accelerate protein folding. GroES binds to the apical surface of the GroEL ring, thereby capping the opening of the GroEL channel. In Rhodopseudomonas palustris (strain ATCC BAA-98 / CGA009), this protein is Co-chaperonin GroES 1.